The following is a 436-amino-acid chain: Prenyltransferase nscD (436 aa).

This sequence belongs to the tryptophan dimethylallyltransferase family.

It functions in the pathway secondary metabolite biosynthesis. Prenyltransferase; part of the gene cluster that mediates the biosynthesis of neosartoricin B, a prenylated anthracenone that probably exhibits T-cell antiproliferative activity, suggestive of a physiological role as an immunosuppressive agent. The non-reducing polyketide synthase nscA probably synthesizes and cyclizes the decaketide backbone. The hydrolase nscB then mediates the product release through hydrolysis followed by spontaneous decarboxylation. The prenyltransferase nscD catalyzes the addition of the dimethylallyl group to the aromatic C5. The FAD-dependent monooxygenase nscC is then responsible for the stereospecific hydroxylation at C2. Neosartoricin B can be converted into two additional compounds neosartoricins C and D. Neosartoricin C is a spirocyclic compound that is cyclized through the attack of C3 hydroxyl on C14, followed by dehydration. On the other hand, neosartoricin D is a further cyclized compound in which attack of C2 on C14 in neosartoricin C results in the formation of the acetal-containing dioxabicyclo-octanone ring. Both of these compounds are novel and possibly represent related metabolites of the gene cluster. This is Prenyltransferase nscD from Arthroderma gypseum (strain ATCC MYA-4604 / CBS 118893) (Microsporum gypseum).